A 359-amino-acid chain; its full sequence is Type II restriction enzyme HgiDI (359 aa).

The catalysed reaction is Endonucleolytic cleavage of DNA to give specific double-stranded fragments with terminal 5'-phosphates.. Its function is as follows. A P subtype restriction enzyme that recognizes the double-stranded sequence 5'-GRCGYC-3' and cleaves after R-2. This Herpetosiphon aurantiacus (Herpetosiphon giganteus) protein is Type II restriction enzyme HgiDI.